Reading from the N-terminus, the 276-residue chain is F-actin-capping protein subunit alpha (276 aa).

The protein belongs to the F-actin-capping protein alpha subunit family. As to quaternary structure, heterodimer of an alpha and a beta subunit.

It is found in the cytoplasm. The protein localises to the cytoskeleton. F-actin-capping proteins bind in a Ca(2+)-independent manner to the fast growing ends of actin filaments (barbed end) thereby blocking the exchange of subunits at these ends. Unlike other capping proteins (such as gelsolin and severin), these proteins do not sever actin filaments. The polypeptide is F-actin-capping protein subunit alpha (cap1) (Aspergillus fumigatus (strain ATCC MYA-4609 / CBS 101355 / FGSC A1100 / Af293) (Neosartorya fumigata)).